The primary structure comprises 864 residues: Leucine--tRNA ligase (864 aa).

The short motif at 42–52 (PYPSGKLHMGH) is the 'HIGH' region element. The short motif at 624–628 (KMSKS) is the 'KMSKS' region element. Residue Lys627 participates in ATP binding.

This sequence belongs to the class-I aminoacyl-tRNA synthetase family.

It is found in the cytoplasm. It catalyses the reaction tRNA(Leu) + L-leucine + ATP = L-leucyl-tRNA(Leu) + AMP + diphosphate. The chain is Leucine--tRNA ligase from Burkholderia pseudomallei (strain 1710b).